A 251-amino-acid polypeptide reads, in one-letter code: Arginine and glutamate-rich protein 1-A (251 aa).

Over residues 1–48 (MGRSRSRSSSRSKHSKHSRKRSRSKSKSKKRSRSKEPKRNRRSRSRSG) the composition is skewed to basic residues. The tract at residues 1-53 (MGRSRSRSSSRSKHSKHSRKRSRSKSKSKKRSRSKEPKRNRRSRSRSGSRRDR) is necessary and sufficient for RNA binding. 2 disordered regions span residues 1–92 (MGRS…ERQR) and 215–251 (RMKL…KATE). Basic and acidic residues-rich tracts occupy residues 49-63 (SRRD…RTDM), 71-92 (RNND…ERQR), and 215-231 (RMKL…EEQK). Residues 54–251 (GGSPPDRTDM…RLSFSLKATE (198 aa)) form a necessary and sufficient for transcriptional regulation region.

It belongs to the ARGLU1 family.

It localises to the nucleus. It is found in the nucleus speckle. The protein resides in the chromosome. Its function is as follows. Dual function regulator of gene expression; regulator of transcription and modulator of alternative splicing. General coactivator of nuclear receptor-induced gene expression. This chain is Arginine and glutamate-rich protein 1-A (arglu1a), found in Danio rerio (Zebrafish).